The primary structure comprises 68 residues: Large ribosomal subunit protein bL35 (68 aa).

2 stretches are compositionally biased toward basic residues: residues 1–15 and 23–38; these read MPKM…KRFK and TARK…HKSS. Residues 1–38 are disordered; it reads MPKMKSHSGTKKRFKVTGSGKVTARKAGKRHLNEHKSS.

This sequence belongs to the bacterial ribosomal protein bL35 family.

The sequence is that of Large ribosomal subunit protein bL35 from Cutibacterium acnes (strain DSM 16379 / KPA171202) (Propionibacterium acnes).